The following is a 495-amino-acid chain: Glutamyl-tRNA(Gln) amidotransferase subunit A (495 aa).

Residues lysine 75 and serine 150 each act as charge relay system in the active site. Serine 174 functions as the Acyl-ester intermediate in the catalytic mechanism.

The protein belongs to the amidase family. GatA subfamily. In terms of assembly, heterotrimer of A, B and C subunits.

It carries out the reaction L-glutamyl-tRNA(Gln) + L-glutamine + ATP + H2O = L-glutaminyl-tRNA(Gln) + L-glutamate + ADP + phosphate + H(+). Its function is as follows. Allows the formation of correctly charged Gln-tRNA(Gln) through the transamidation of misacylated Glu-tRNA(Gln) in organisms which lack glutaminyl-tRNA synthetase. The reaction takes place in the presence of glutamine and ATP through an activated gamma-phospho-Glu-tRNA(Gln). In Paraburkholderia phytofirmans (strain DSM 17436 / LMG 22146 / PsJN) (Burkholderia phytofirmans), this protein is Glutamyl-tRNA(Gln) amidotransferase subunit A.